Here is a 417-residue protein sequence, read N- to C-terminus: Histidine--tRNA ligase (417 aa).

The protein belongs to the class-II aminoacyl-tRNA synthetase family. Homodimer.

It localises to the cytoplasm. The enzyme catalyses tRNA(His) + L-histidine + ATP = L-histidyl-tRNA(His) + AMP + diphosphate + H(+). In Oleidesulfovibrio alaskensis (strain ATCC BAA-1058 / DSM 17464 / G20) (Desulfovibrio alaskensis), this protein is Histidine--tRNA ligase.